A 628-amino-acid chain; its full sequence is Probable potassium transport system protein Kup (628 aa).

The next 12 membrane-spanning stretches (helical) occupy residues 20–40 (ALLTLGALGVVFGDIGTSPLY), 63–83 (IISMVLWTITLIVTVKYVMLV), 110–130 (FVAVAGMLGAALFYGDVVITP), 151–171 (FILPISLAVLIAIFAIQPLGT), 178–198 (FGPIMLLWFVTLAGLGIPQII), 212–232 (ALGLIVAEPFQAFVLLGAVVL), 256–276 (WFCVVMPALILTYLGQGALVI), 296–316 (IPLVILATIATVIASQAVISG), 346–366 (IYMPLVNGLLFVSVMVVVLVF), 375–395 (AYGLAVTGTLVLVSVLYLIYV), 398–418 (TWWKTALFIVFIGIPEVLLFA), and 422–442 (TKIHDGGWLPLLTAAVLIVVM).

Belongs to the HAK/KUP transporter (TC 2.A.72) family.

The protein localises to the cell membrane. The enzyme catalyses K(+)(in) + H(+)(in) = K(+)(out) + H(+)(out). In terms of biological role, transport of potassium into the cell. Likely operates as a K(+):H(+) symporter. This is Probable potassium transport system protein Kup from Corynebacterium glutamicum (strain R).